The following is a 331-amino-acid chain: PHD finger protein 11 (331 aa).

The segment at 42-78 (KRTCALCPKDVEYNVLYFAQSENIAAHENCLLYSSGL) adopts a C2HC pre-PHD-type zinc-finger fold. The PHD-type zinc-finger motif lies at 108-160 (LKCKFCHKRGATVGCDLKNCNKNYHFFCAKKDDAVPQSDGVRGIYKLLCQQHA).

In terms of assembly, interacts with BRCA1 and RELA. Highly expressed in T and B-cells, as well as natural killer and mature dendritic cells. Expressed at higher levels in Th1 as compared to Th2 cells. Expressed at low levels in all normal tissues tested, including lung, testis, small intestine, breast, liver and placenta.

It localises to the nucleus. Positive regulator of Th1-type cytokine gene expression. The protein is PHD finger protein 11 (PHF11) of Homo sapiens (Human).